A 194-amino-acid chain; its full sequence is Pyridoxal 5'-phosphate synthase subunit PdxT (194 aa).

An L-glutamine-binding site is contributed by 50 to 52 (GES). Cysteine 82 (nucleophile) is an active-site residue. Residues arginine 109 and 136-137 (IR) each bind L-glutamine. Catalysis depends on charge relay system residues histidine 172 and glutamate 174.

Belongs to the glutaminase PdxT/SNO family. As to quaternary structure, in the presence of PdxS, forms a dodecamer of heterodimers. Only shows activity in the heterodimer.

It catalyses the reaction aldehydo-D-ribose 5-phosphate + D-glyceraldehyde 3-phosphate + L-glutamine = pyridoxal 5'-phosphate + L-glutamate + phosphate + 3 H2O + H(+). The enzyme catalyses L-glutamine + H2O = L-glutamate + NH4(+). The protein operates within cofactor biosynthesis; pyridoxal 5'-phosphate biosynthesis. Its function is as follows. Catalyzes the hydrolysis of glutamine to glutamate and ammonia as part of the biosynthesis of pyridoxal 5'-phosphate. The resulting ammonia molecule is channeled to the active site of PdxS. This chain is Pyridoxal 5'-phosphate synthase subunit PdxT, found in Streptococcus pneumoniae (strain CGSP14).